The following is a 430-amino-acid chain: Adenylosuccinate synthetase (430 aa).

GTP-binding positions include 12–18 (GDEGKGK) and 40–42 (GHT). The Proton acceptor role is filled by D13. Mg(2+) contacts are provided by D13 and G40. IMP is bound by residues 13 to 16 (DEGK), 38 to 41 (NAGH), T130, R144, Q224, and T239. H41 (proton donor) is an active-site residue. Residues 277–297 (PFPTEQDNETGRKIGERGREF) are disordered. Positions 285–296 (ETGRKIGERGRE) are enriched in basic and acidic residues. 299–305 (TNTGRPR) is a binding site for substrate. IMP is bound at residue R303. GTP is bound by residues R305, 331 to 333 (KLD), and 413 to 415 (STS).

This sequence belongs to the adenylosuccinate synthetase family. In terms of assembly, homodimer. The cofactor is Mg(2+).

Its subcellular location is the cytoplasm. The enzyme catalyses IMP + L-aspartate + GTP = N(6)-(1,2-dicarboxyethyl)-AMP + GDP + phosphate + 2 H(+). It participates in purine metabolism; AMP biosynthesis via de novo pathway; AMP from IMP: step 1/2. Its function is as follows. Plays an important role in the de novo pathway of purine nucleotide biosynthesis. Catalyzes the first committed step in the biosynthesis of AMP from IMP. The sequence is that of Adenylosuccinate synthetase from Bradyrhizobium sp. (strain ORS 278).